We begin with the raw amino-acid sequence, 126 residues long: 3-isopropylmalate dehydrogenase (126 aa).

Residues Asp14 and Asp18 each contribute to the Mg(2+) site. 48-60 (GSAPDIAGKNIAN) contributes to the NAD(+) binding site.

The protein belongs to the isocitrate and isopropylmalate dehydrogenases family. LeuB type 1 subfamily. As to quaternary structure, homodimer. Mg(2+) serves as cofactor. Requires Mn(2+) as cofactor.

Its subcellular location is the cytoplasm. The catalysed reaction is (2R,3S)-3-isopropylmalate + NAD(+) = 4-methyl-2-oxopentanoate + CO2 + NADH. It participates in amino-acid biosynthesis; L-leucine biosynthesis; L-leucine from 3-methyl-2-oxobutanoate: step 3/4. Its function is as follows. Catalyzes the oxidation of 3-carboxy-2-hydroxy-4-methylpentanoate (3-isopropylmalate) to 3-carboxy-4-methyl-2-oxopentanoate. The product decarboxylates to 4-methyl-2 oxopentanoate. In Buchnera aphidicola subsp. Uroleucon rurale, this protein is 3-isopropylmalate dehydrogenase (leuB).